Here is a 1028-residue protein sequence, read N- to C-terminus: Beta-galactosidase (1028 aa).

2 residues coordinate substrate: N104 and D203. D203 lines the Na(+) pocket. Residues E418, H420, and E463 each coordinate Mg(2+). Residues E463 and 539-542 (EYAH) contribute to the substrate site. The active-site Proton donor is the E463. The active-site Nucleophile is E539. N599 contributes to the Mg(2+) binding site. 2 residues coordinate Na(+): F603 and N606. N606 and W1004 together coordinate substrate.

Belongs to the glycosyl hydrolase 2 family. In terms of assembly, homodimer. Mg(2+) is required as a cofactor. Mn(2+) serves as cofactor. The cofactor is Fe cation. It depends on Na(+) as a cofactor. Requires K(+) as cofactor.

It catalyses the reaction Hydrolysis of terminal non-reducing beta-D-galactose residues in beta-D-galactosides.. Its activity is regulated as follows. Completely inhibited by Hg(2+), Cu(2+) Ag(2+), and partially inhibited by Zn(2+), imidazole and EDTA. Activated by Ca(2+), Co(2+), Ni(2+). This beta-galactosidase is also able to catalyze glycosyl transfer to a series of acceptors, including hexose, pentose, beta- or alpha-disaccharides, hexahydroxy alcohol, cyclitol, and aromatic glycosides, resulting in the production of galacto-oligosaccharides (GOS). The chain is Beta-galactosidase (lacZ) from Enterobacter agglomerans (Erwinia herbicola).